Consider the following 501-residue polypeptide: Serine/threonine-protein kinase pelle (501 aa).

A disordered region spans residues 1-25 (MSGVQTAEAEAQAQNQANGNRTRSR). The segment covering 7-18 (AEAEAQAQNQAN) has biased composition (low complexity). Residues 55 to 121 (WQQLATAVKL…NAMRLIKDYV (67 aa)) enclose the Death domain. A disordered region spans residues 144–176 (DSSAKVNNGPPFPSSSGVSNSNNNRTSTTATEE). The span at 149–167 (VNNGPPFPSSSGVSNSNNN) shows a compositional bias: low complexity. Residues 213 to 499 (WSPDNRLGQG…AVLKRFEPFV (287 aa)) enclose the Protein kinase domain. ATP contacts are provided by residues 219–227 (LGQGGFGDV) and lysine 240. The Proton acceptor role is filled by aspartate 346. Residues 348-351 (KPAN) and aspartate 364 each bind ATP.

This sequence belongs to the protein kinase superfamily. TKL Ser/Thr protein kinase family. Pelle subfamily. Interacts (via Death domain) with tub (via Death domain). Interacts with Pellino (Pli).

It is found in the cell membrane. Its subcellular location is the cytoplasm. It catalyses the reaction L-seryl-[protein] + ATP = O-phospho-L-seryl-[protein] + ADP + H(+). The catalysed reaction is L-threonyl-[protein] + ATP = O-phospho-L-threonyl-[protein] + ADP + H(+). In terms of biological role, plays an essential role in the Tl receptor signaling pathway that establishes embryonic dorsoventral polarity; the signal directs import of dl into ventral and ventrolateral nuclei, thereby establishing dorsoventral polarity. Tub recruits pll to the plasma membrane and protein-protein interaction activates pll. This Drosophila melanogaster (Fruit fly) protein is Serine/threonine-protein kinase pelle (pll).